Reading from the N-terminus, the 461-residue chain is Bifunctional protein GlmU (461 aa).

The segment at 1–229 is pyrophosphorylase; that stretch reads MLKKEINVVI…CKEILGVNNK (229 aa). Residues 11 to 14, Lys25, Gln76, 81 to 82, 103 to 105, Gly140, Glu154, and Asn227 contribute to the UDP-N-acetyl-alpha-D-glucosamine site; these read LAAG, GT, and YGD. Asp105 contacts Mg(2+). Residue Asn227 coordinates Mg(2+). The linker stretch occupies residues 230 to 250; it reads LQLSILEKIFRKKQVNDLLLS. An N-acetyltransferase region spans residues 251-461; sequence GVTLKDPNHF…PQKIIKKTDQ (211 aa). Residues Arg333 and Lys351 each contribute to the UDP-N-acetyl-alpha-D-glucosamine site. Catalysis depends on His363, which acts as the Proton acceptor. Residues Tyr366 and Asn377 each contribute to the UDP-N-acetyl-alpha-D-glucosamine site. Acetyl-CoA contacts are provided by residues Ala380, 386–387, and Ala423; that span reads NY.

It in the N-terminal section; belongs to the N-acetylglucosamine-1-phosphate uridyltransferase family. This sequence in the C-terminal section; belongs to the transferase hexapeptide repeat family. In terms of assembly, homotrimer. Mg(2+) is required as a cofactor.

The protein localises to the cytoplasm. The enzyme catalyses alpha-D-glucosamine 1-phosphate + acetyl-CoA = N-acetyl-alpha-D-glucosamine 1-phosphate + CoA + H(+). The catalysed reaction is N-acetyl-alpha-D-glucosamine 1-phosphate + UTP + H(+) = UDP-N-acetyl-alpha-D-glucosamine + diphosphate. It functions in the pathway nucleotide-sugar biosynthesis; UDP-N-acetyl-alpha-D-glucosamine biosynthesis; N-acetyl-alpha-D-glucosamine 1-phosphate from alpha-D-glucosamine 6-phosphate (route II): step 2/2. The protein operates within nucleotide-sugar biosynthesis; UDP-N-acetyl-alpha-D-glucosamine biosynthesis; UDP-N-acetyl-alpha-D-glucosamine from N-acetyl-alpha-D-glucosamine 1-phosphate: step 1/1. It participates in bacterial outer membrane biogenesis; LPS lipid A biosynthesis. Catalyzes the last two sequential reactions in the de novo biosynthetic pathway for UDP-N-acetylglucosamine (UDP-GlcNAc). The C-terminal domain catalyzes the transfer of acetyl group from acetyl coenzyme A to glucosamine-1-phosphate (GlcN-1-P) to produce N-acetylglucosamine-1-phosphate (GlcNAc-1-P), which is converted into UDP-GlcNAc by the transfer of uridine 5-monophosphate (from uridine 5-triphosphate), a reaction catalyzed by the N-terminal domain. The chain is Bifunctional protein GlmU from Buchnera aphidicola subsp. Schizaphis graminum (strain Sg).